A 386-amino-acid chain; its full sequence is MKFVDEAKIKVDAGDGGNGCIGFRTEKYIPRGGPNGGDGGDGGDVYLQADENLNTLVDFRFVRFYDAERGENGQTRDCTGSRGKDKIIQVPVGTRCRDADTGEVLGDLTRDGQQLMVAKGGFHGLGNARFKSSTNRAPRQKTDGTPGEVRNLLLELLLLADVGMLGLPNAGKSTFIRSVSAAKPKVADYPFTTLVPNLGVVSMGYGRSFVIADIPGLIEGASDGAGLGARFLRHLERCRVLLHTIDLLPADGSDPAENALVIIAELKKHSPKLASKPRWLVFNKTDLLLEDEAELVIERVKEALEWDGPVYKVAAISKTGTDTLCRDVVEYLEELPAEFTPEEERQQVEFQWDDYHKTAIEELDDDSDDDDWSEDDEMMEVIYTKE.

The 159-residue stretch at 1–159 (MKFVDEAKIK…RNLLLELLLL (159 aa)) folds into the Obg domain. An OBG-type G domain is found at 160 to 333 (ADVGMLGLPN…LCRDVVEYLE (174 aa)). Residues 166 to 173 (GLPNAGKS), 191 to 195 (FTTLV), 213 to 216 (DIPG), 283 to 286 (NKTD), and 314 to 316 (AAI) contribute to the GTP site. 2 residues coordinate Mg(2+): serine 173 and threonine 193.

The protein belongs to the TRAFAC class OBG-HflX-like GTPase superfamily. OBG GTPase family. In terms of assembly, monomer. Requires Mg(2+) as cofactor.

Its subcellular location is the cytoplasm. Functionally, an essential GTPase which binds GTP, GDP and possibly (p)ppGpp with moderate affinity, with high nucleotide exchange rates and a fairly low GTP hydrolysis rate. Plays a role in control of the cell cycle, stress response, ribosome biogenesis and in those bacteria that undergo differentiation, in morphogenesis control. The polypeptide is GTPase Obg (Psychromonas ingrahamii (strain DSM 17664 / CCUG 51855 / 37)).